Reading from the N-terminus, the 130-residue chain is 3-aminoacrylate deaminase RutC (130 aa).

This sequence belongs to the RutC family.

It catalyses the reaction (Z)-3-aminoacrylate + H2O + H(+) = 3-oxopropanoate + NH4(+). Involved in pyrimidine catabolism. Catalyzes the deamination of 3-aminoacrylate to malonic semialdehyde, a reaction that can also occur spontaneously. RutC may facilitate the reaction and modulate the metabolic fitness, rather than catalyzing essential functions. This is 3-aminoacrylate deaminase RutC from Variovorax paradoxus (strain S110).